Reading from the N-terminus, the 275-residue chain is MSNFTAADVKKLRDLTGAGMMDSKKALTEAEGDFDKAVEVLRVKGAKDVGKRAGRTAANGLVAHSGKALLELNCETDFVAKTDSFVALAQQLVEHGERTGVNSAEELLASEIDGKGVAELIQEQSAKIGEKLVLNRFAKLDGTVAVYLHRKAQDLPPAVGVLVQYTGRTDEAGDADARGVAMQIAAMRPQYLSRDEVPAEVVESERRIAEQTAREENKPEAALPKIVEGRVNSFFKDFVLLEQASVTDNKKPVRQVLAEAGVEVTRFVRFEVGQA.

The segment at 76-79 (TDFV) is involved in Mg(2+) ion dislocation from EF-Tu.

Belongs to the EF-Ts family.

It is found in the cytoplasm. In terms of biological role, associates with the EF-Tu.GDP complex and induces the exchange of GDP to GTP. It remains bound to the aminoacyl-tRNA.EF-Tu.GTP complex up to the GTP hydrolysis stage on the ribosome. This is Elongation factor Ts from Salinispora tropica (strain ATCC BAA-916 / DSM 44818 / JCM 13857 / NBRC 105044 / CNB-440).